The primary structure comprises 424 residues: Histidine--tRNA ligase (424 aa).

The protein belongs to the class-II aminoacyl-tRNA synthetase family. In terms of assembly, homodimer.

It is found in the cytoplasm. It carries out the reaction tRNA(His) + L-histidine + ATP = L-histidyl-tRNA(His) + AMP + diphosphate + H(+). In Salmonella paratyphi B (strain ATCC BAA-1250 / SPB7), this protein is Histidine--tRNA ligase.